The chain runs to 343 residues: Signal peptide peptidase 1 (343 aa).

At 1–19 (MKTHERAANLALAGLSLAP) the chain is on the lumenal side. Residues 20–40 (LVVKVEPNVNVILTACLAVYV) traverse the membrane as a helical segment. The Cytoplasmic segment spans residues 41–62 (GCYRSVKPTPPSETMSKEHAMR). A helical membrane pass occupies residues 63-83 (FPLVGSAMLLSLFLLFKFLSK). The Lumenal portion of the chain corresponds to 84–87 (DLVN). Residues 88-108 (AVLTAYFFILGIAALCATLLP) form a helical membrane-spanning segment. At 109 to 136 (SIKRFLPKEWNDNAIVWCAPFFHSLSVE) the chain is on the cytoplasmic side. A helical transmembrane segment spans residues 137–157 (FTKSQVVASIPGFFFCIWYAA). The Lumenal portion of the chain corresponds to 158-160 (KKH). The helical transmembrane segment at 161-181 (WLANNVLGISFCIQGIEMLSL) threads the bilayer. Residues 182-188 (GSFKTGA) are Cytoplasmic-facing. A helical transmembrane segment spans residues 189–209 (ILLAGLFFYDIFWVFFTPVMV). Residue Asp198 is part of the active site. Over 210 to 230 (SVAKSFDAPIKLLFPTGDAAR) the chain is Lumenal. A helical membrane pass occupies residues 231-251 (PFSMLGLGDIVIPGIFVALAL). Residue Asp239 is part of the active site. Residues 252–266 (RFDVSRGIKNRYFNS) are Cytoplasmic-facing. A helical membrane pass occupies residues 267 to 287 (AFLGYTVGLTVTIIVMNWFQA). At 288–290 (AQP) the chain is on the lumenal side. A PAL motif is present at residues 290 to 292 (PAL). A helical membrane pass occupies residues 291-311 (ALLYIVPGVIGFVAVHCLWNG). Over 312 to 343 (EVKPLLEYNESKAEEEDAVEEDTDSKQNKKEE) the chain is Cytoplasmic. A disordered region spans residues 322–343 (SKAEEEDAVEEDTDSKQNKKEE). Positions 324–334 (AEEEDAVEEDT) are enriched in acidic residues. Residues 340–343 (KKEE) carry the Endoplasmic reticulum targeting signal motif.

It belongs to the peptidase A22B family. Ubiquitous.

The protein resides in the endoplasmic reticulum membrane. Its function is as follows. Intramembrane-cleaving aspartic protease (I-CLiP) that cleaves type II membrane signal peptides in the hydrophobic plane of the membrane. Catalyzes intramembrane proteolysis of some signal peptides after they have been cleaved from a preprotein, resulting in the release of the fragment from the ER membrane into the cytoplasm. This Oryza sativa subsp. japonica (Rice) protein is Signal peptide peptidase 1 (SPP1).